A 268-amino-acid polypeptide reads, in one-letter code: HTH-type transcriptional activator RhaS (268 aa).

The region spanning 171–268 (RQMIRWLENN…YSIAPRELRI (98 aa)) is the HTH araC/xylS-type domain. 2 consecutive DNA-binding regions (H-T-H motif) follow at residues 188–209 (EELA…KSQT) and 236–259 (IINI…KNEY).

As to quaternary structure, binds DNA as a dimer.

It localises to the cytoplasm. Its function is as follows. Activates expression of the rhaBAD and rhaT operons. The sequence is that of HTH-type transcriptional activator RhaS from Mannheimia succiniciproducens (strain KCTC 0769BP / MBEL55E).